Reading from the N-terminus, the 136-residue chain is Large ribosomal subunit protein uL16c (136 aa).

This sequence belongs to the universal ribosomal protein uL16 family. In terms of assembly, part of the 50S ribosomal subunit.

It localises to the plastid. The protein localises to the chloroplast. This is Large ribosomal subunit protein uL16c from Mesostigma viride (Green alga).